Reading from the N-terminus, the 142-residue chain is Endoribonuclease YbeY (142 aa).

Positions 107, 111, and 117 each coordinate Zn(2+).

The protein belongs to the endoribonuclease YbeY family. It depends on Zn(2+) as a cofactor.

It is found in the cytoplasm. In terms of biological role, single strand-specific metallo-endoribonuclease involved in late-stage 70S ribosome quality control and in maturation of the 3' terminus of the 16S rRNA. This is Endoribonuclease YbeY from Parabacteroides distasonis (strain ATCC 8503 / DSM 20701 / CIP 104284 / JCM 5825 / NCTC 11152).